The primary structure comprises 844 residues: Prickle-like protein 2 (844 aa).

The region spanning 18–126 (FDFQRNSTSD…NVRPFPVTMT (109 aa)) is the PET domain. Position 92 is a phosphoserine (Ser92). LIM zinc-binding domains are found at residues 128–193 (AICE…CLKP), 193–253 (PRCA…LYAE), and 253–317 (EYCD…EDPN). Disordered regions lie at residues 314-350 (EDPNGSDSSDSAFQNARAKESRRSAKIGKNKGKTEEP) and 481-519 (ESYSDMSSQSFSETRGSIQVPKYEEEEEEEGGLSTQQCR). Polar residues predominate over residues 318-327 (GSDSSDSAFQ). A phosphoserine mark is found at Ser319, Ser321, and Ser322. A compositionally biased stretch (low complexity) spans 481–493 (ESYSDMSSQSFSE). A phosphothreonine mark is found at Thr534, Thr536, and Thr539. Phosphoserine is present on residues Ser543, Ser546, Ser607, and Ser642. A disordered region spans residues 639-709 (MHQSFDFDGG…HLASEREAIS (71 aa)). Residues 682 to 692 (FRPHRSRRSRR) show a composition bias toward basic residues. A compositionally biased stretch (basic and acidic residues) spans 693 to 709 (SRSDNALHLASEREAIS). The residue at position 731 (Ser731) is a Phosphoserine. The tract at residues 822–844 (STLGGRGQLHSRKRQKSKNCIIS) is disordered. Cys841 carries the cysteine methyl ester modification. Residue Cys841 is the site of S-farnesyl cysteine attachment. Positions 842 to 844 (IIS) are cleaved as a propeptide — removed in mature form.

This sequence belongs to the prickle / espinas / testin family. Expressed in brain, eye and testis. Additionally in fetal brain, adult cartilage, pancreatic islet, gastric cancer and uterus tumors.

The protein resides in the nucleus membrane. This chain is Prickle-like protein 2 (PRICKLE2), found in Homo sapiens (Human).